The following is a 257-amino-acid chain: MSRPLITRSPASPLNNQGIPTPAQLTKSNAPVHIDVGGHMYTSSLATLTKYPESRIGRLFDGTEPIVLDSLKQHYFIDRDGQMFRYILNFLRTSKLLIPDDFKDYTLLYEEAKYFQLQPMLLEMERWKQDRETSRFSRPCECLVVRVAPDLGERITLSGDKSLIEEVFPEIGDVMCNSVNAGWNHDSTHVIRFPLNGYCHLNSVQVLERLQQRGFEIVGSCGGGVDSSQFSEYVLRRELRRTPRVPSVIRIKQEPLD.

The disordered stretch occupies residues 1-25; it reads MSRPLITRSPASPLNNQGIPTPAQL. Phosphoserine occurs at positions 9 and 12. Over residues 9-25 the composition is skewed to polar residues; the sequence is SPASPLNNQGIPTPAQL. The BTB domain maps to 30–100; that stretch reads APVHIDVGGH…LRTSKLLIPD (71 aa).

As to quaternary structure, forms homopentamers. Interacts with KCTD15, probably forming heteropentamers depending on its abundance in a cell-type dependent manner. Interacts with TFAP2A, TFAP2B and TFAP2C via the BTB domain. In terms of processing, sumoylated.

The protein localises to the nucleus. In terms of biological role, may repress the transcriptional activity of AP-2 family members, including TFAP2A, TFAP2B and TFAP2C to various extent. The protein is BTB/POZ domain-containing protein KCTD1 (Kctd1) of Rattus norvegicus (Rat).